The primary structure comprises 332 residues: L-lactate dehydrogenase A chain (332 aa).

Residues 29 to 57 (GMVG…MEDK) and arginine 99 each bind NAD(+). Substrate contacts are provided by arginine 106, asparagine 138, and arginine 169. Position 138 (asparagine 138) interacts with NAD(+). Histidine 193 acts as the Proton acceptor in catalysis. Threonine 248 is a substrate binding site.

The protein belongs to the LDH/MDH superfamily. LDH family. Homotetramer.

Its subcellular location is the cytoplasm. The catalysed reaction is (S)-lactate + NAD(+) = pyruvate + NADH + H(+). The protein operates within fermentation; pyruvate fermentation to lactate; (S)-lactate from pyruvate: step 1/1. Its function is as follows. Interconverts simultaneously and stereospecifically pyruvate and lactate with concomitant interconversion of NADH and NAD(+). This chain is L-lactate dehydrogenase A chain (ldha), found in Sphyraena idiastes (Pelican barracuda).